The sequence spans 246 residues: Acetoacetate decarboxylase (246 aa).

Lys116 serves as the catalytic Schiff-base intermediate with acetoacetate.

Belongs to the ADC family.

It carries out the reaction acetoacetate + H(+) = acetone + CO2. In terms of biological role, catalyzes the conversion of acetoacetate to acetone and carbon dioxide. This Bordetella avium (strain 197N) protein is Acetoacetate decarboxylase.